The following is a 161-amino-acid chain: Bacterial E2-like ubiquitin protein BilB (161 aa).

Catalysis depends on C113, which acts as the Glycyl thioester intermediate.

Component of the Bil (bacterial ISG15-like) antiviral defense system, composed of BilA, BilB, BilC and BilD. The Bil system specifically conjugates a ubiquitin-like moiety (bilA) to the bacteriophage central tail fiber (CTF, or tip attachment protein J) via reactions involving E1 (bilD) and E2 (bilB). Modifies CTF of phage SECphi27 and SECphi4, which probably interferes with assembly of the phage tail. Also modifies T5 baseplate hub protein pb3 (gene D16), but not gp27 of phage T6 (Bil defends against T6). BilB probably accepts ubiquitin from the BilA-BilD (E1) complex and catalyzes its covalent attachment to target protein (CTF). Bil-encoding bacteria produce mostly defective phage SECphi27, many of which have phage assembly defects, including no tails. SECphi27 phage progeny produced in E.coli with the Bil system inject less DNA into naive host cells, maybe because the phage are less able to adsorb and inject their DNA into host cells. Functionally, expression of the Bil system in E.coli (strain MG1655) confers about 100-fold resistance to phage SECphi27, SECphi18, SECphi6, SECphi4 and T5, but not to SECphi17. When cells expressing the Bil system are infected by phage SECphi27 at low multiplicity of infection (0.03 MOI) the culture survives, at 3.0 MOI the culture collapses at the same time as cells without the Bil system. This chain is Bacterial E2-like ubiquitin protein BilB, found in Collimonas sp. (strain OK412).